Here is a 305-residue protein sequence, read N- to C-terminus: Formamidopyrimidine-DNA glycosylase (305 aa).

The active-site Schiff-base intermediate with DNA is the Pro2. The active-site Proton donor is Glu3. Lys59 functions as the Proton donor; for beta-elimination activity in the catalytic mechanism. DNA contacts are provided by His92, Arg111, and Arg154. The FPG-type zinc-finger motif lies at Gln239–Pro273. Arg263 functions as the Proton donor; for delta-elimination activity in the catalytic mechanism. The interval Pro282–Glu305 is disordered.

The protein belongs to the FPG family. In terms of assembly, monomer. It depends on Zn(2+) as a cofactor.

The catalysed reaction is Hydrolysis of DNA containing ring-opened 7-methylguanine residues, releasing 2,6-diamino-4-hydroxy-5-(N-methyl)formamidopyrimidine.. It catalyses the reaction 2'-deoxyribonucleotide-(2'-deoxyribose 5'-phosphate)-2'-deoxyribonucleotide-DNA = a 3'-end 2'-deoxyribonucleotide-(2,3-dehydro-2,3-deoxyribose 5'-phosphate)-DNA + a 5'-end 5'-phospho-2'-deoxyribonucleoside-DNA + H(+). Its function is as follows. Involved in base excision repair of DNA damaged by oxidation or by mutagenic agents. Acts as a DNA glycosylase that recognizes and removes damaged bases. Has a preference for oxidized purines, such as 7,8-dihydro-8-oxoguanine (8-oxoG). Has AP (apurinic/apyrimidinic) lyase activity and introduces nicks in the DNA strand. Cleaves the DNA backbone by beta-delta elimination to generate a single-strand break at the site of the removed base with both 3'- and 5'-phosphates. In Symbiobacterium thermophilum (strain DSM 24528 / JCM 14929 / IAM 14863 / T), this protein is Formamidopyrimidine-DNA glycosylase.